The primary structure comprises 447 residues: Innexin-5 (447 aa).

4 helical membrane passes run 30 to 47, 108 to 128, 198 to 218, and 283 to 303; these read TSTL…SQYV, QWIP…SIIW, ALYL…FWIL, and VYVF…CSLA. Residues 389-447 form a disordered region; that stretch reads KKDDDSALPASAPVDLQEDDDDDTPFPPPTKAVAETLTSDDEEEETDVDSPDTTATLPR. Residues 426–438 are compositionally biased toward acidic residues; it reads TSDDEEEETDVDS.

Belongs to the pannexin family.

It is found in the cell membrane. The protein localises to the cell junction. It localises to the gap junction. Structural component of the gap junctions. This is Innexin-5 (inx-5) from Caenorhabditis elegans.